Reading from the N-terminus, the 275-residue chain is NH(3)-dependent NAD(+) synthetase (275 aa).

46 to 53 (GISGGQDS) lines the ATP pocket. Asp-52 is a Mg(2+) binding site. Position 140 (Arg-140) interacts with deamido-NAD(+). Position 160 (Thr-160) interacts with ATP. Glu-165 serves as a coordination point for Mg(2+). Deamido-NAD(+) is bound by residues Lys-173 and Asp-180. ATP contacts are provided by Lys-189 and Thr-211. 260-261 (HK) contacts deamido-NAD(+).

This sequence belongs to the NAD synthetase family. Homodimer.

It carries out the reaction deamido-NAD(+) + NH4(+) + ATP = AMP + diphosphate + NAD(+) + H(+). The protein operates within cofactor biosynthesis; NAD(+) biosynthesis; NAD(+) from deamido-NAD(+) (ammonia route): step 1/1. Its function is as follows. Catalyzes the ATP-dependent amidation of deamido-NAD to form NAD. Uses ammonia as a nitrogen source. This is NH(3)-dependent NAD(+) synthetase from Escherichia coli (strain K12 / MC4100 / BW2952).